The sequence spans 1627 residues: MGFSTADGGGGPGARDLESLDACIQRTLSALYPPFEATAATVLWQLFSVAERCHGGDGLHCLTSFLLPAKRALQHLQQEACARYRGLVFLHPGWPLCAHEKVVVQLASLHGVRLQPGDFYLQVTSAGKQSARLVLKCLSRLGRGTEEVTVPEAMYGCVFTGAFLEWVNRERRHVPLQTCLLTSGLAVHRAPWSDVTDPVFVPSPGAILQSYSSCTGPERLPSSPSEAPVPTQATAGPHFQGSASCPDTLTSPCRRGHTGSDQLRHLPYPERAELGSPRTLSGSSDRDFEKVSPSEQGPRMPPENCGGSGERPDPMDQEDRPKALTFHTDLGIPSSRRRPPGDPTCVQPRRWFRESYMEALRNPMPLGSSEEALGDLACSSLTGASRDLGTGAVASGTQEETSGPRGDPQQTPSLEKERHTPSRTGPGAAGRTLPRRSRSWERAPRSSRGAQAAACHTSHHSAGSRPGGHLGGQAVGTPNCVPVEGPGCTKEEDVLASSACVSTDGGSLHCHNPSGPSDVPARQPHPEQEGWPPGTGDFPSQVPKQVLDVSQELLQSGVVTLPGTRDRHGRAVVQVRTRSLLWTREHSSCAELTRLLLYFHSIPRKEVRDLGLVVLVDARRSPAAPAVSQALSGLQNNTSPIIHSILLLVDKESAFRPDKDAIIQCEVVSSLKAVHKFVDSCQLTADLDGSFPYSHGDWICFRQRLEHFAANCEEAIIFLQNSFCSLNTHRTPRTAQEVAELIDQHETMMKLVLEDPLLVSLRLEGGTVLARLRREELGTEDSRDTLEAATSLYDRVDEEVHRLVLTSNNRLQQLEHLRELASLLEGNDQQSCQKGLQLAKENPQRTEEMVQDFRRGLSAVVSQAECREGELARWTRSSELCETVSSWMGPLDPEACPSSPVAECLRSCHQEATSVAAEAFPGAGVAVLKPHALGKPWASQQDLWLQYPQTRLRLEEALSEAAPDPSLPPLAQSPPKHERAQEAMRRHQKPPSFPSTDSGGGAWEPAQPLSGLPGRALLCGQDGETLRPGLCALWDPLSLLRGLPGAGATTAHLEDSSACSSEPTQTLASRPRKHPQKKMIKKTQSFEIPQPDSGPRDSCQPDHTSVFSKGLEVTSTVATEKKLPLWQHARSPPVTQSRSLSSPSGLHPAEEDGRQQVGSSRLRHIMAEMIATEREYIRCLGYVIDNYFPEMERMDLPQGLRGKHHVIFGNLEKLHDFHQQHFLRELERCQHCPLAVGRSFLRHEEQFGMYVIYSKNKPQSDALLSSHGNAFFKDKQRELGDKMDLASYLLRPVQRVAKYALLLQDLLKEASCGLAQGQELGELRAAEVVVCFQLRHGNDLLAMDAIRGCDVNLKEQGQLRCRDEFIVCCGRKKYLRHVFLFEDLILFSKTQKVEGSHDVYLYKQSFKTAEIGMTENVGDSGLRFEIWFRRRRKSQDTYILQASSAEVKSAWTDVIGRILWRQALKSRELRIQEMASMGIGNQPFMDVKPRDRTPDCAVISDRAPKCAVMSDRVPDSIVKGTESQMRGSTAVSSSDHAAPFKRPHSTISDSSTSSSSSQSSSILGSLGLLVSSSPAHPGLWSPAHSPWSSDIRACVEEDEPEPELETGTQAAVCEGAPAVLLSRTRQA.

6 disordered regions span residues 211–349 (YSSC…VQPR), 381–475 (LTGA…GQAV), 501–537 (VSTD…GTGD), 959–1008 (SEAA…PAQP), 1049–1111 (TTAH…SKGL), and 1124–1159 (PLWQ…QVGS). The segment covering 241 to 251 (GSASCPDTLTS) has biased composition (polar residues). Composition is skewed to basic and acidic residues over residues 262–273 (QLRHLPYPERAE) and 310–322 (ERPD…DRPK). A compositionally biased stretch (gly residues) spans 465-474 (RPGGHLGGQA). A compositionally biased stretch (basic and acidic residues) spans 975-985 (PKHERAQEAMR). A compositionally biased stretch (polar residues) spans 1057-1068 (SACSSEPTQTLA). Positions 1070-1081 (RPRKHPQKKMIK) are enriched in basic residues. Composition is skewed to polar residues over residues 1101–1111 (PDHTSVFSKGL) and 1133–1144 (PVTQSRSLSSPS). In terms of domain architecture, DH spans 1161 to 1340 (RLRHIMAEMI…CFQLRHGNDL (180 aa)). The 109-residue stretch at 1352–1460 (NLKEQGQLRC…WTDVIGRILW (109 aa)) folds into the PH domain. Residues 1519-1558 (KGTESQMRGSTAVSSSDHAAPFKRPHSTISDSSTSSSSSQ) are disordered. The span at 1521-1535 (TESQMRGSTAVSSSD) shows a compositional bias: polar residues. The span at 1545–1558 (STISDSSTSSSSSQ) shows a compositional bias: low complexity.

As to quaternary structure, found in a complex with ARHGEF11 and ARHGEF12; binding to ARHGEF11 and ARHGEF12 enhances CDC42 GEF activity of PLEKHG4B, and PLEKHG4B, in turn, inhibits ARHGEF11- and ARHGEF12-mediated RHOA activation. Interacts with ANXA2; this interaction is required for PLEKHG4B localization to cell-cell adhesions.

It is found in the basal cell membrane. Its subcellular location is the cell junction. It localises to the nucleus. The protein localises to the cytoplasm. Its function is as follows. Guanine nucleotide exchange factor (GEF) which specifically activates small GTPase CDC42 by exchanging bound GDP for free GTP. Plays a role in actin cytoskeletal remodeling in the late stage of cell-cell junction formation by regulating the contractility of actin filaments, which prompts the conversion from 'open' to 'closed' junctions. The chain is Pleckstrin homology domain-containing family G member 4B from Homo sapiens (Human).